The sequence spans 299 residues: Circadian clock oscillator protein KaiA (299 aa).

The psR domain, binds oxidized quinones stretch occupies residues 1–135; the sequence is MQSPLSLCLF…LHLGPICTLP (135 aa). Residues 1 to 169 form the KaiA N-terminal domain; sequence MQSPLSLCLF…RLADKLKERL (169 aa). A flexible linker region spans residues 170 to 178; sequence GYLGVYYKR. A KaiA C-terminal domain is found at 179 to 287; sequence KPSHFYRNFS…GEMYRRSIPR (109 aa).

Belongs to the KaiA family. In terms of assembly, homodimer. The KaiABC1 complex composition changes during the circadian cycle to control KaiC1 phosphorylation. Complexes KaiC1(6), KaiA(2-4):KaiC1(6), KaiB(6):KaiC1(6) and KaiC1(6):KaiB(6):KaiA(12) are among the most important forms, many form cooperatively. KaiA and CikA bind to the same region of the KaiB(fs) form and therefore compete. Interacts with KaiC1 but not KaiC2 or KaiC3. Interacts with itself, not seen to interact with other Kai proteins.

Key component of the KaiABC oscillator complex, which constitutes the main circadian regulator in cyanobacteria. Complex composition changes during the circadian cycle to control KaiC phosphorylation. KaiA stimulates KaiC autophosphorylation, while KaiB sequesters KaiA, leading to KaiC autodephosphorylation. KaiA binding to the KaiC CII domain during the subjective day yields KaiA(2-4):KaiC(6) complexes which stimulate KaiC autophosphorylation. Phospho-Ser-431 KaiC accumulation triggers binding of KaiB during the subjective night to form the KaiB(6):KaiC(6) complex, leading to changes in the output regulators CikA and SasA. KaiB(6):KaiC(6) formation exposes a site for KaiA binding on KaiB that sequesters KaiA from KaiC's CII domain, making the KaiC(6):KaiB(6):KaiA(12) complex resulting in KaiC autodephosphorylation. Complete dephosphorylation of KaiC leads to dissociation of KaiA(2):KaiB(1), completing 1 cycle of the Kai oscillator. In terms of biological role, component of the oscillator and circadian clock in this organism, enhances fitness in a rhythmic environment. Stimulates KaiC1 to autophosphorylate, has no effect on the kinase activity of KaiC2 or KaiC3. Functionally, binds oxidized quinones via the N-terminal PsR domain, allowing it to sense redox changes and possibly mediate clock input. This chain is Circadian clock oscillator protein KaiA, found in Synechocystis sp. (strain ATCC 27184 / PCC 6803 / Kazusa).